Reading from the N-terminus, the 396-residue chain is Stearoyl-[acyl-carrier-protein] 9-desaturase, chloroplastic (396 aa).

A chloroplast-targeting transit peptide spans 1–33 (MALKLNPFLSQTQKLPSFALPPMASTRSPKFYM). 6 residues coordinate Fe cation: E138, E176, H179, E229, E262, and H265.

This sequence belongs to the fatty acid desaturase type 2 family. As to quaternary structure, homodimer. Fe(2+) serves as cofactor. As to expression, higher levels in developing seeds than in leaf and root tissues.

It is found in the plastid. Its subcellular location is the chloroplast. The enzyme catalyses octadecanoyl-[ACP] + 2 reduced [2Fe-2S]-[ferredoxin] + O2 + 2 H(+) = (9Z)-octadecenoyl-[ACP] + 2 oxidized [2Fe-2S]-[ferredoxin] + 2 H2O. Its pathway is lipid metabolism; fatty acid metabolism. Converts stearoyl-ACP to oleoyl-ACP by introduction of a cis double bond between carbons 9 and 10 of the acyl chain. The sequence is that of Stearoyl-[acyl-carrier-protein] 9-desaturase, chloroplastic from Ricinus communis (Castor bean).